Reading from the N-terminus, the 140-residue chain is Pre-mRNA-splicing factor NTC20 (140 aa).

Ser-139 carries the phosphoserine modification.

As to quaternary structure, belongs to the NTC complex (or PRP19-associated complex), composed of at least CEF1, CLF1, ISY1, NTC20, SNT309, SYF1, SYF2, and PRP19. The NTC complex associates with the spliceosome after the release of the U1 and U4 snRNAs and forms the CWC spliceosome subcomplex (or CEF1-associated complex) reminiscent of a late-stage spliceosome composed also of the U2, U5 and U6 snRNAs and at least BUD13, BRR2, CDC40, CUS1, CWC2, CWC15, CWC21, CWC22, CWC23, CWC24, CWC25, CWC27, ECM2, HSH155, IST3, LEA1, MSL1, PRP8, PRP9, PRP11, PRP21, PRP22, PRP45, PRP46, SLU7, SMB1, SMD1, SMD2, SMD3, SMX2, SMX3, SNU114, SPP2, RSE1 and YJU2. Interacts with CEF1, CLF1, ISY1, PRP46, and SYF1.

The protein resides in the nucleus. In terms of biological role, involved in pre-mRNA splicing. As a component of the NTC complex, associates to the spliceosome to mediate conformational rearrangement or to stabilize the structure of the spliceosome after U4 snRNA dissociation, which leads to spliceosome maturation. This is Pre-mRNA-splicing factor NTC20 (NTC20) from Saccharomyces cerevisiae (strain ATCC 204508 / S288c) (Baker's yeast).